Here is a 167-residue protein sequence, read N- to C-terminus: Mediator of RNA polymerase II transcription subunit 10 (167 aa).

A disordered region spans residues 54-92; it reads STHTKPHPPPPPPPQPTDPTTAAAPALRDNPDPPLSSIQ. A compositionally biased stretch (pro residues) spans 60 to 70; that stretch reads HPPPPPPPQPT.

Belongs to the Mediator complex subunit 10 family. In terms of assembly, component of the Mediator complex.

The protein localises to the nucleus. Functionally, component of the Mediator complex, a coactivator involved in the regulated transcription of nearly all RNA polymerase II-dependent genes. Mediator functions as a bridge to convey information from gene-specific regulatory proteins to the basal RNA polymerase II transcription machinery. Mediator is recruited to promoters by direct interactions with regulatory proteins and serves as a scaffold for the assembly of a functional preinitiation complex with RNA polymerase II and the general transcription factors. In Aspergillus clavatus (strain ATCC 1007 / CBS 513.65 / DSM 816 / NCTC 3887 / NRRL 1 / QM 1276 / 107), this protein is Mediator of RNA polymerase II transcription subunit 10 (nut2).